Reading from the N-terminus, the 105-residue chain is MQSPAMKRIKSSSHSRWDGSGSVNEMPFPSTIRLQGSFWECSTRRHMCYILRYLFRANGHRHFSYERLDCRNQTLRLPDHLYQPSRPHLLPHLSQLLLVRDSGYL.

The interval 1–27 (MQSPAMKRIKSSSHSRWDGSGSVNEMP) is disordered.

It is found in the mitochondrion. This is an uncharacterized protein from Arabidopsis thaliana (Mouse-ear cress).